Reading from the N-terminus, the 498-residue chain is Nucleoprotein (498 aa).

The Unconventional nuclear localization signal signature appears at 1-18 (MASQGTKRSYEQMETDGE). The interval 1 to 21 (MASQGTKRSYEQMETDGERQN) is disordered. The segment covering 8 to 21 (RSYEQMETDGERQN) has biased composition (basic and acidic residues). The short motif at 198–216 (KRGINDRNFWRGENGRKTR) is the Bipartite nuclear localization signal element.

The protein belongs to the influenza viruses nucleoprotein family. As to quaternary structure, homomultimerizes to form the nucleocapsid. May bind host exportin-1/XPO1. Binds to viral genomic RNA. Protein-RNA contacts are mediated by a combination of electrostatic interactions between positively charged residues and the phosphate backbone and planar interactions between aromatic side chains and bases. In terms of processing, late in virus-infected cells, may be cleaved from a 56-kDa protein to a 53-kDa protein by a cellular caspase. This cleavage might be a marker for the onset of apoptosis in infected cells or have a specific function in virus host interaction.

The protein resides in the virion. Its subcellular location is the host nucleus. Functionally, encapsidates the negative strand viral RNA, protecting it from nucleases. The encapsidated genomic RNA is termed the ribonucleoprotein (RNP) and serves as template for transcription and replication. The RNP needs to be localized in the host nucleus to start an infectious cycle, but is too large to diffuse through the nuclear pore complex. NP comprises at least 2 nuclear localization signals that are responsible for the active RNP import into the nucleus through cellular importin alpha/beta pathway. Later in the infection, nclear export of RNPs are mediated through viral proteins NEP interacting with M1 which binds nucleoproteins. It is possible that nucleoprotein binds directly host exportin-1/XPO1 and plays an active role in RNPs nuclear export. M1 interaction with RNP seems to hide nucleoprotein's nuclear localization signals. Soon after a virion infects a new cell, M1 dissociates from the RNP under acidification of the virion driven by M2 protein. Dissociation of M1 from RNP unmasks nucleoprotein's nuclear localization signals, targeting the RNP to the nucleus. This is Nucleoprotein from Aves (whales).